A 33-amino-acid chain; its full sequence is IDTCRLPSDRGRCKASFERWYFNGRTCAKFIYG.

The BPTI/Kunitz inhibitor domain occupies 4 to 33; it reads CRLPSDRGRCKASFERWYFNGRTCAKFIYG.

This sequence belongs to the venom Kunitz-type family. 02 (native) subfamily. Expressed by the venom gland.

The protein resides in the secreted. Functionally, serine protease inhibitor that inhibits trypsin at a molar ratio of 1:1. In Cyriopagopus hainanus (Chinese bird spider), this protein is Kunitz-type serine protease inhibitor hainantoxin F7-25.66.